Consider the following 920-residue polypeptide: Phosphoenolpyruvate carboxylase (920 aa).

Active-site residues include His138 and Lys583.

It belongs to the PEPCase type 1 family. Mg(2+) serves as cofactor.

The catalysed reaction is oxaloacetate + phosphate = phosphoenolpyruvate + hydrogencarbonate. In terms of biological role, forms oxaloacetate, a four-carbon dicarboxylic acid source for the tricarboxylic acid cycle. In Streptococcus pyogenes serotype M5 (strain Manfredo), this protein is Phosphoenolpyruvate carboxylase.